The sequence spans 240 residues: Nuclear receptor-interacting protein 3 (240 aa).

This chain is Nuclear receptor-interacting protein 3 (Nrip3), found in Mus musculus (Mouse).